We begin with the raw amino-acid sequence, 244 residues long: Small ribosomal subunit protein uS2 (244 aa).

Belongs to the universal ribosomal protein uS2 family.

The sequence is that of Small ribosomal subunit protein uS2 from Exiguobacterium sibiricum (strain DSM 17290 / CCUG 55495 / CIP 109462 / JCM 13490 / 255-15).